Reading from the N-terminus, the 260-residue chain is Phosphatidate cytidylyltransferase (260 aa).

7 helical membrane-spanning segments follow: residues 9 to 29 (IIALLIFLPILLMGGTTLMLF), 46 to 66 (MIKLISVPGIFSALALIIIML), 70 to 90 (AGDWVSNIQLKSLIAMSFILL), 102 to 122 (FMDAAFCLMSVAYVGIGFMYF), 130 to 150 (LHYILYAFLVVWLTDTGAYIF), 172 to 192 (FIGGLICSLIVPIVMLFFVDF), and 196 to 216 (IWLLLLVTIILSIFGQLGDLV).

Belongs to the CDS family.

It is found in the cell membrane. It catalyses the reaction a 1,2-diacyl-sn-glycero-3-phosphate + CTP + H(+) = a CDP-1,2-diacyl-sn-glycerol + diphosphate. Its pathway is phospholipid metabolism; CDP-diacylglycerol biosynthesis; CDP-diacylglycerol from sn-glycerol 3-phosphate: step 3/3. This chain is Phosphatidate cytidylyltransferase (cdsA), found in Staphylococcus haemolyticus (strain JCSC1435).